The primary structure comprises 277 residues: Purine nucleoside phosphorylase 2 (277 aa).

Phosphate contacts are provided by residues H65, 85–87 (RGH), and A117. E197 is a binding site for a purine D-ribonucleoside. Residue S216 coordinates phosphate. N239 contacts a purine D-ribonucleoside.

This sequence belongs to the PNP/MTAP phosphorylase family. Hexamer. Dimer of trimers.

It carries out the reaction a purine D-ribonucleoside + phosphate = a purine nucleobase + alpha-D-ribose 1-phosphate. Its pathway is purine metabolism; xanthosine degradation. It participates in purine metabolism; purine nucleoside salvage. Its activity is regulated as follows. Rapidly inactivated by p-chloromercuriphenylsulfonic acid (p-CMB). Dithiothreitol incubation restores the activity. Functionally, the purine nucleoside phosphorylases catalyze the phosphorolytic breakdown of the N-glycosidic bond in the beta-(deoxy)ribonucleoside molecules, with the formation of the corresponding free purine bases and pentose-1-phosphate. This protein can degrade all purine nucleosides including xanthosine, inosine and guanosine, but cannot cleave adenosine, deoxyadenosine or hypoxanthine arabinoside. Has a preference for the neutral over the monoanionic form of xanthosine. This is Purine nucleoside phosphorylase 2 (xapA) from Escherichia coli (strain K12).